A 1190-amino-acid chain; its full sequence is PAN2-PAN3 deadenylation complex catalytic subunit PAN2 (1190 aa).

WD repeat units follow at residues 24–63 (TTIV…NSLY), 129–166 (NKFN…PNVL), 167–207 (SSFD…TMKT), 222–264 (GNYI…AIAP), 266–306 (PFPA…NVYL), and 322–361 (NNKP…KDFV). The interval 364-511 (PQPVEQPDII…FQYKFQGKLN (148 aa)) is linker. In terms of domain architecture, USP spans 512–924 (KVPNCYSRLQ…KPIVIMYQQT (413 aa)). The Exonuclease domain occupies 988-1158 (VAIDAEFVML…EDANTALLLY (171 aa)). 4 residues coordinate a divalent metal cation: D991, E993, D1097, and D1150.

It belongs to the peptidase C19 family. PAN2 subfamily. Forms a heterotrimer with an asymmetric homodimer of the regulatory subunit PAN3 to form the poly(A)-nuclease (PAN) deadenylation complex. Requires a divalent metal cation as cofactor.

It is found in the cytoplasm. It carries out the reaction Exonucleolytic cleavage of poly(A) to 5'-AMP.. Positively regulated by the regulatory subunit PAN3. Catalytic subunit of the poly(A)-nuclease (PAN) deadenylation complex, one of two cytoplasmic mRNA deadenylases involved in mRNA turnover. PAN specifically shortens poly(A) tails of RNA and the activity is stimulated by poly(A)-binding protein PAB1. PAN deadenylation is followed by rapid degradation of the shortened mRNA tails by the CCR4-NOT complex. Deadenylated mRNAs are then degraded by two alternative mechanisms, namely exosome-mediated 3'-5' exonucleolytic degradation, or deadenylation-dependent mRNA decaping and subsequent 5'-3' exonucleolytic degradation by XRN1. May also be involved in post-transcriptional maturation of mRNA poly(A) tails. The protein is PAN2-PAN3 deadenylation complex catalytic subunit PAN2 of Candida albicans (strain SC5314 / ATCC MYA-2876) (Yeast).